A 670-amino-acid polypeptide reads, in one-letter code: Extracellular matrix protein 2 (670 aa).

Positions 1–19 are cleaved as a signal peptide; that stretch reads MKLAVLFCFILLIVLQTDC. The VWFC domain maps to 96-153; sequence GYCFVKGMIMYNKAVWSPEPCTTCLCSNGRVLCDETECHPKACPYTIKPEGECCPICS. Residues 185–270 form a disordered region; it reads SEEDEEIAEG…EEDAIRGDVF (86 aa). Residues 192-227 are compositionally biased toward basic and acidic residues; it reads AEGHKEHKKETSVPTKIHGDGERTERKLRPEKEGRS. Over residues 241 to 263 the composition is skewed to acidic residues; the sequence is ESKEETEREGEEEEEEEEEEEED. A Cell attachment site motif is present at residues 266–268; sequence RGD. The region spanning 278–315 is the LRRNT domain; that stretch reads PGTPRGRPRLPRSCSLSYRTISCVHADFTEIPPITAPE. LRR repeat units follow at residues 339–359, 365–386, 387–407, 410–430, 436–456, 457–478, 481–501, 507–528, 529–549, 553–573, 580–601, 603–624, and 632–655; these read NLER…GPKA, KLMR…LPST, LEEL…SLSD, QLVT…DPLA, SLSY…GLPA, STEE…CFNH, KITM…APLA, NLES…LPKS, LLHL…VFGH, GLEY…DLVS, SLRE…IQDM, ALHF…QICN, and ALEH…AFSC. N-linked (GlcNAc...) asparagine glycosylation is present at Asn-349. An N-linked (GlcNAc...) asparagine glycan is attached at Asn-420. A glycan (N-linked (GlcNAc...) asparagine) is linked at Asn-477.

The protein belongs to the small leucine-rich proteoglycan (SLRP) family. SLRP class I subfamily. In terms of assembly, interacts with numerous extracellular matrix proteins. Interacts with isoform 1 of MSL1. Interacts with isoform 3 of RASSF1.

The protein localises to the secreted. It is found in the extracellular space. Its subcellular location is the extracellular matrix. Promotes matrix assembly and cell adhesiveness. The protein is Extracellular matrix protein 2 (Ecm2) of Mus musculus (Mouse).